A 313-amino-acid chain; its full sequence is Ribosomal RNA small subunit methyltransferase H (313 aa).

S-adenosyl-L-methionine is bound by residues 35-37, Asp-55, Phe-79, Asp-101, and Gln-108; that span reads GGH.

Belongs to the methyltransferase superfamily. RsmH family.

It is found in the cytoplasm. It catalyses the reaction cytidine(1402) in 16S rRNA + S-adenosyl-L-methionine = N(4)-methylcytidine(1402) in 16S rRNA + S-adenosyl-L-homocysteine + H(+). Specifically methylates the N4 position of cytidine in position 1402 (C1402) of 16S rRNA. This chain is Ribosomal RNA small subunit methyltransferase H, found in Salmonella typhi.